We begin with the raw amino-acid sequence, 463 residues long: Increased DNA methylation 3 (463 aa).

Residues 169-182 (NLDESRETEQDCSR) show a composition bias toward basic and acidic residues. Disordered regions lie at residues 169 to 199 (NLDE…DYNS) and 300 to 347 (RRFK…TTGT). Polar residues predominate over residues 184–199 (GDATANGVVTNEDYNS). Residues 300-310 (RRFKNSSKKAT) are compositionally biased toward basic residues.

As to quaternary structure, interacts with MBD7 (via C-terminus), IDM1 and IDM2. Part of a complex made of MBD7, IDM1, IDM2 and IDM3.

It is found in the nucleus. Its function is as follows. Acts as an anti-silencing factor that prevents DNA hypermethylation and gene repression. This Arabidopsis thaliana (Mouse-ear cress) protein is Increased DNA methylation 3.